We begin with the raw amino-acid sequence, 83 residues long: NADH dehydrogenase [ubiquinone] iron-sulfur protein 5-B (83 aa).

Residues 11 to 52 (KGRCYDFWMDFSECMSHCREPKDCTLLREDYLECLHHSKEFQ) form the CHCH domain. 2 consecutive short sequence motifs (cx9C motif) follow at residues 14-24 (CYDFWMDFSEC) and 34-44 (CTLLREDYLEC). Intrachain disulfides connect Cys14–Cys44 and Cys24–Cys34. The tract at residues 62–83 (QRKLRAASRKGEETGDGTHTHH) is disordered.

The protein belongs to the complex I NDUFS5 subunit family. As to quaternary structure, complex I is composed of at least 49 different subunits. This is a component of the iron-sulfur (IP) fragment of the enzyme.

Its subcellular location is the mitochondrion. The protein resides in the mitochondrion inner membrane. It is found in the mitochondrion intermembrane space. Its function is as follows. Accessory subunit of the mitochondrial membrane respiratory chain NADH dehydrogenase (Complex I), that is believed not to be involved in catalysis. Complex I functions in the transfer of electrons from NADH to the respiratory chain. The immediate electron acceptor for the enzyme is believed to be ubiquinone. This Arabidopsis thaliana (Mouse-ear cress) protein is NADH dehydrogenase [ubiquinone] iron-sulfur protein 5-B.